The primary structure comprises 174 residues: Variant surface antigen B (174 aa).

The first 29 residues, 1–29 (MKKSIFSKKLLVSFGSLVALASIPLIAIS), serve as a signal peptide directing secretion. Cys-30 carries the N-palmitoyl cysteine lipid modification. Residue Cys-30 is the site of S-diacylglycerol cysteine attachment. The tract at residues 32–174 (QTNTDKSQQP…SQDSGNGSTK (143 aa)) is disordered. Residues 38–49 (SQQPGSGSSTSG) are compositionally biased toward low complexity. Residues 50 to 75 (GQSGTGLGSGTTTGGQSGTTTGGRSG) are compositionally biased toward gly residues. The span at 76–97 (SGSSSSTTGGQTGTGSDSQDSG) shows a compositional bias: low complexity. 7 consecutive repeat copies span residues 88–99 (GTGSDSQDSGAK), 100–111 (GTGSDSQDSGAK), 112–123 (GTGSDSQDSGAK), 124–135 (GTGSDSQDSGAK), 136–147 (GTGSDSQDSGAK), 148–159 (GTGSDSQDSGAK), and 160–171 (GTGSDSQDSGNG). Residues 88–171 (GTGSDSQDSG…GSDSQDSGNG (84 aa)) form a 7 X 12 AA tandem repeats region. A compositionally biased stretch (polar residues) spans 102–174 (GSDSQDSGAK…SQDSGNGSTK (73 aa)).

It is found in the cell membrane. Functionally, responsible for the antigenic diversity for host adaptation. The chain is Variant surface antigen B (vlpB) from Mesomycoplasma hyorhinis (Mycoplasma hyorhinis).